The chain runs to 364 residues: Fructose-1,6-bisphosphatase class 1 1 (364 aa).

Residues glutamate 99, aspartate 121, leucine 123, and aspartate 124 each contribute to the Mg(2+) site. Substrate-binding positions include 124–127 (DGSS) and asparagine 220. Glutamate 292 serves as a coordination point for Mg(2+).

This sequence belongs to the FBPase class 1 family. As to quaternary structure, homotetramer. Requires Mg(2+) as cofactor.

It localises to the cytoplasm. It catalyses the reaction beta-D-fructose 1,6-bisphosphate + H2O = beta-D-fructose 6-phosphate + phosphate. It participates in carbohydrate biosynthesis; gluconeogenesis. This chain is Fructose-1,6-bisphosphatase class 1 1, found in Albidiferax ferrireducens (strain ATCC BAA-621 / DSM 15236 / T118) (Rhodoferax ferrireducens).